Consider the following 64-residue polypeptide: Chromatin protein Cren7 (64 aa).

The protein belongs to the Cren7 family. Monomer. Post-translationally, methylated at multiple sites, to varying extents.

The protein localises to the chromosome. It is found in the cytoplasm. In terms of biological role, a chromatin protein, binds double-stranded DNA without sequence specificity. Constrains negative DNA supercoils. This Aeropyrum pernix (strain ATCC 700893 / DSM 11879 / JCM 9820 / NBRC 100138 / K1) protein is Chromatin protein Cren7.